Consider the following 102-residue polypeptide: MDKTKRPLRKSKRSFRRRLPPPIGSGDRIDYRNMSLISRFISEQGKILSRRVNRLTLKQQRLITIAIKQARILSSLPFLNNEKQFERPESIPKTAGPSIRNK.

Residues 1-19 show a composition bias toward basic residues; that stretch reads MDKTKRPLRKSKRSFRRRL. The interval 1–26 is disordered; sequence MDKTKRPLRKSKRSFRRRLPPPIGSG.

The protein belongs to the bacterial ribosomal protein bS18 family. In terms of assembly, part of the 30S ribosomal subunit.

Its subcellular location is the plastid. It localises to the chloroplast. The polypeptide is Small ribosomal subunit protein bS18c (Piper cenocladum (Ant piper)).